Reading from the N-terminus, the 469-residue chain is Properdin (469 aa).

Positions 1 to 27 (MITEGAQAPRLLLPPLLLLLTLPATGS) are cleaved as a signal peptide. TSP type-1 domains follow at residues 28–76 (DPVL…QPCR), 77–134 (SPRW…QCCP), 136–191 (MGGW…QVCP), 193–255 (HGAW…PPCP), 257–313 (AGGW…VPCP), 315–377 (DGEW…QHCP), and 379–462 (KGSW…PACK). 3 cysteine pairs are disulfide-bonded: Cys-32-Cys-56, Cys-43-Cys-72, and Cys-57-Cys-75. C-linked (Man) tryptophan glycosylation is found at Trp-83 and Trp-86. 7 disulfide bridges follow: Cys-89–Cys-127, Cys-93–Cys-133, Cys-104–Cys-111, Cys-132–Cys-170, Cys-148–Cys-184, Cys-152–Cys-190, and Cys-163–Cys-174. An O-linked (Fuc...) threonine glycan is attached at Thr-92. Trp-139, Trp-142, and Trp-145 each carry a C-linked (Man) tryptophan glycan. An O-linked (Fuc...) threonine glycan is attached at Thr-151. C-linked (Man) tryptophan glycans are attached at residues Trp-196, Trp-199, and Trp-202. Intrachain disulfides connect Cys-205–Cys-248, Cys-209–Cys-254, and Cys-224–Cys-238. A glycan (O-linked (Fuc...) serine) is linked at Ser-208. Residues 219-238 (TRSRKCSAPEPSQKPPGKPC) are disordered. C-linked (Man) tryptophan glycans are attached at residues Trp-260 and Trp-263. 3 disulfide bridges follow: Cys-269–Cys-306, Cys-273–Cys-312, and Cys-284–Cys-296. O-linked (Fuc...) threonine glycosylation is present at Thr-272. 2 C-linked (Man) tryptophan glycosylation sites follow: Trp-321 and Trp-324. 3 disulfide bridges follow: Cys-327-Cys-370, Cys-337-Cys-376, and Cys-350-Cys-360. The interval 351–359 (RGRKFDGHR) is interaction with Complement C3 beta chain. Trp-382, Trp-385, and Trp-388 each carry a C-linked (Man) tryptophan glycan. 3 cysteine pairs are disulfide-bonded: Cys-391–Cys-455, Cys-395–Cys-461, and Cys-407–Cys-439. Residue Asn-428 is glycosylated (N-linked (GlcNAc...) (complex) asparagine).

In terms of assembly, in plasma, properdin exists as dimers, trimers or tetramers in the relative proportions of 26:54:20. Interacts with the pro-C3-convertase enzyme complex (C3b-Bb) comprised of Complement C3 beta chain (C3b) and the Complement factor B Bb fragment (Bb), where it binds (via its TSP type-1 5 domain) with C3b and Bb. This interaction stabilizes the complex and allows it to become the active C3-convertase enzyme complex (C3b-Bb-FP). Interacts with C3b. Interacts with CFB.

The protein localises to the secreted. In terms of biological role, a positive regulator of the alternate pathway (AP) of complement. It binds to and stabilizes the C3- and C5-convertase enzyme complexes. Inhibits CFI-CFH mediated degradation of Complement C3 beta chain (C3b). The polypeptide is Properdin (Homo sapiens (Human)).